A 701-amino-acid polypeptide reads, in one-letter code: Sulfate anion transporter 1 (701 aa).

Residues 1–20 are disordered; it reads MDESPEPLQQGRGPVPVRRQ. The next 2 helical transmembrane spans lie at 68–90 and 94–116; these read YLAG…AIAY and AGLQ…FLMG. N-linked (GlcNAc...) asparagine glycans are attached at residues Asn-158 and Asn-163. 7 helical membrane passes run 176–198, 255–277, 290–309, 342–364, 377–399, 412–434, and 472–494; these read YAIR…MGVL, GAGQ…LLAA, VPLP…SHFG, ALDA…EMFA, LLAV…SAAL, TQLS…APLF, and LVWA…LAGV. The region spanning 527–687 is the STAS domain; that stretch reads EFEGLVPEPG…LSVHDAVQTA (161 aa).

It belongs to the SLC26A/SulP transporter (TC 2.A.53) family. Expressed most abundantly in the kidney and liver, with lower levels in the pancreas, testis, brain, small intestine, colon, and lung.

It localises to the cell membrane. The protein resides in the basolateral cell membrane. The enzyme catalyses thiosulfate(in) + sulfate(out) = thiosulfate(out) + sulfate(in). It carries out the reaction 2 hydrogencarbonate(out) + sulfate(in) = 2 hydrogencarbonate(in) + sulfate(out). The catalysed reaction is oxalate(in) + sulfate(out) = oxalate(out) + sulfate(in). It catalyses the reaction oxalate(in) + 2 hydrogencarbonate(out) = oxalate(out) + 2 hydrogencarbonate(in). Its function is as follows. Sodium-independent sulfate anion transporter. Can transport other anions including bicarbonate, thiosulfate and oxalate by mediating sulfate-thiosulfate, sulfate-hydrogencarbonate and sulfate-oxalate anion exchange. Mediates oxalate-hydrogencarbonate anion exchange. This chain is Sulfate anion transporter 1 (SLC26A1), found in Homo sapiens (Human).